We begin with the raw amino-acid sequence, 981 residues long: MSETVSLHKLVKKAVHSKLSFKTFLGLFSQLNTKQVVQDGEYQTEILEIVQNPRNLNDKKITEYKVVLAIQLSLSSSEELKRFWGNLSKISLVGQVDYLIRLNKILKYEYSKYDKDIVRLLIKVQYCDYIVEVLDSFGDKKLSTEQKSLANHIVFFASSVIEHVVVKDEALVNDLVFQLATRLEGLRLSNLLDFLLLKSKNILSEDQIRLTDSSGSGEDKSSDLPTITTSLYKNLSVGSLSSAKQETYNETIKFLWLNKIMKSWKFADNESIFNNFVHNFIPSSDKNKNPYLTSFELIKATFKGFGYAVINNDDCYVLFNWKNFIITRIPVILSTLKFANVNDEETLERAVLNAFNSLPDSIVKVLTNLASGSTKVYDLRQIFIKSLIFNRLLPPVAFQKFFPMESKITQQVILSELAQYNHDLNLRRKFNDKLINVNSEFTSLEESGLLELCNSLPASLEYSYSRQIELSNAINDIIDEMKISREHEKLNRLLLSVMSNVQLTNILVFNSNPYVVLGKMIDYIDSENFRIDDDDENFQDVYSYCGVLILSIISIIEKFKIDLSTFNIKNSFALDYINNFYYRLCDDLTNQIPVNSDEEDNTIATNYNNLLIDWINALFDDSNDGLSDDLIKSISIKQIYKLIPLVYQQAITATSIGKIDFSILTNGIDYLSQVFLIPTTVSIINWLLSEISNKKTDAESLPVKVLSEIVKSNISSESGSQELSSLVFKIVVNICGSNILIALKKIKDWENSQRIRDVVSIVTANLDSNYVEKDLSLPESKSDININEQIKSHLVNFQQQADSPTPIHAFIHRFISDSKDQVLRVLLQEVTSYQKQNNEATKIFINLASYLVVSSSIDSVEDKKYWHGYLSNVSSSATEHKILKNSDKEFNSSMDYHYSSIFNDASSGASNDDDLFNDKSSKQLSSGKLLEQLRTKVNRYNNLLAKFNVIFAENQDPSSPWHKTVNTLADKLLDDINDLYI.

This sequence belongs to the Mediator complex subunit 5 family. Component of the Mediator complex.

It localises to the nucleus. Its function is as follows. Component of the Mediator complex, a coactivator involved in the regulated transcription of nearly all RNA polymerase II-dependent genes. Mediator functions as a bridge to convey information from gene-specific regulatory proteins to the basal RNA polymerase II transcription machinery. Mediator is recruited to promoters by direct interactions with regulatory proteins and serves as a scaffold for the assembly of a functional preinitiation complex with RNA polymerase II and the general transcription factors. This Scheffersomyces stipitis (strain ATCC 58785 / CBS 6054 / NBRC 10063 / NRRL Y-11545) (Yeast) protein is Mediator of RNA polymerase II transcription subunit 5 (NUT1).